A 2290-amino-acid chain; its full sequence is Protein Ycf2 (2290 aa).

1644–1651 (GSIGTGRS) provides a ligand contact to ATP.

This sequence belongs to the Ycf2 family.

The protein resides in the plastid. It is found in the chloroplast stroma. Its function is as follows. Probable ATPase of unknown function. Its presence in a non-photosynthetic plant (Epifagus virginiana) and experiments in tobacco indicate that it has an essential function which is probably not related to photosynthesis. The sequence is that of Protein Ycf2 from Barbarea verna (Land cress).